Reading from the N-terminus, the 434-residue chain is MTDILNCTKSEEIFSAAQELMPGGVSSPVRAFKSVGGQPIVFDRVKGPFAWDIDGNRYIDYIGSWGPAICGHAHPEVTTALQEAIEKGTSFGAPCVLENKLAEMVIDAVPSVEMVRFVNSGTEACMAVLRLMRAFTGRDKVIKFDGCYHGHADMFLVKAGSGVATLGLPDSPGVPRTTTANTLTAPYNDLEAVKKLFSENPDAISGVILEPIVGNAGFITPEPGFLEGLRELTTENGSLLVFDEVMTGFRISYGGAQEKFGVTPDLTTLGKVIGGGLPVGAYGGKKEIMSMVAPSGPVYQAGTLSGNPLAMTAGIKTLELLKQEGTYEKLDAITSRLIEGIIQSAENNGIAIYGGSVSAMFGFFLCDGPVRNFDEAKTNDAKLFGKLHREMLRRGVYLAPSPFEAGFTSLAHNEEEIDKTIEVFDQCFNTIKNQ.

An N6-(pyridoxal phosphate)lysine modification is found at Lys271.

This sequence belongs to the class-III pyridoxal-phosphate-dependent aminotransferase family. HemL subfamily. As to quaternary structure, homodimer. It depends on pyridoxal 5'-phosphate as a cofactor.

The protein localises to the cytoplasm. It carries out the reaction (S)-4-amino-5-oxopentanoate = 5-aminolevulinate. It functions in the pathway porphyrin-containing compound metabolism; protoporphyrin-IX biosynthesis; 5-aminolevulinate from L-glutamyl-tRNA(Glu): step 2/2. Its pathway is porphyrin-containing compound metabolism; chlorophyll biosynthesis. This is Glutamate-1-semialdehyde 2,1-aminomutase from Prochlorococcus marinus (strain MIT 9312).